The following is a 615-amino-acid chain: 1-deoxy-D-xylulose-5-phosphate synthase (615 aa).

Residues H72 and 113–115 each bind thiamine diphosphate; that span reads GHA. D144 provides a ligand contact to Mg(2+). Residues 145–146, N173, Y281, and E360 each bind thiamine diphosphate; that span reads GA. N173 contributes to the Mg(2+) binding site.

The protein belongs to the transketolase family. DXPS subfamily. As to quaternary structure, homodimer. It depends on Mg(2+) as a cofactor. Thiamine diphosphate is required as a cofactor.

It catalyses the reaction D-glyceraldehyde 3-phosphate + pyruvate + H(+) = 1-deoxy-D-xylulose 5-phosphate + CO2. Its pathway is metabolic intermediate biosynthesis; 1-deoxy-D-xylulose 5-phosphate biosynthesis; 1-deoxy-D-xylulose 5-phosphate from D-glyceraldehyde 3-phosphate and pyruvate: step 1/1. In terms of biological role, catalyzes the acyloin condensation reaction between C atoms 2 and 3 of pyruvate and glyceraldehyde 3-phosphate to yield 1-deoxy-D-xylulose-5-phosphate (DXP). In Thermus thermophilus (strain ATCC BAA-163 / DSM 7039 / HB27), this protein is 1-deoxy-D-xylulose-5-phosphate synthase.